Consider the following 477-residue polypeptide: MNFETVIGLEVHVELKTNSKIFSPAPAHFGEDPNANTNIIDWSFPGVLPVMNKGVIDYGIKAALALNMDIHQKMHFDRKNYFYPDNPKAYQISQFDEPIGYNGWIEIELEDGTTKKIRIERAHLEEDAGKNTHGSDGYSYVDLNRQGVPLIEIVSEADMRSPEEAYAYLTALKEIIQYTGISDVKMEEGSMRVDANISIRPYGQEEFGTKTELKNLNSFNFVRKGLAFEEKRQAEILRSGGQIRQETRRYDEATGETLLMRVKEGSADYRYFPEPDLPIFEIEDAWIEQVRNSLPAFPKERRAKYVGDYGLSDYDAKQLTATKAVSDFFEAALAAGGDAKAVSNWLQGDVAQYLNAEGKTISEIELTPENLTEMIALIADGTISSKIAKKVFVHLAKNGGSAKEYVQKAGLIQISDPAQLLPIIQQVFADNEKAINDYKGGNKNAAKSLIGQLMKATKGQANPQVAQKLLNEELEKL.

The protein belongs to the GatB/GatE family. GatB subfamily. As to quaternary structure, heterotrimer of A, B and C subunits.

It catalyses the reaction L-glutamyl-tRNA(Gln) + L-glutamine + ATP + H2O = L-glutaminyl-tRNA(Gln) + L-glutamate + ADP + phosphate + H(+). The enzyme catalyses L-aspartyl-tRNA(Asn) + L-glutamine + ATP + H2O = L-asparaginyl-tRNA(Asn) + L-glutamate + ADP + phosphate + 2 H(+). In terms of biological role, allows the formation of correctly charged Asn-tRNA(Asn) or Gln-tRNA(Gln) through the transamidation of misacylated Asp-tRNA(Asn) or Glu-tRNA(Gln) in organisms which lack either or both of asparaginyl-tRNA or glutaminyl-tRNA synthetases. The reaction takes place in the presence of glutamine and ATP through an activated phospho-Asp-tRNA(Asn) or phospho-Glu-tRNA(Gln). In Streptococcus gordonii (strain Challis / ATCC 35105 / BCRC 15272 / CH1 / DL1 / V288), this protein is Aspartyl/glutamyl-tRNA(Asn/Gln) amidotransferase subunit B.